Consider the following 306-residue polypeptide: Pyridoxal 5'-phosphate synthase subunit PdxS (306 aa).

Aspartate 36 is a binding site for D-ribose 5-phosphate. The Schiff-base intermediate with D-ribose 5-phosphate role is filled by lysine 93. Residue glycine 165 participates in D-ribose 5-phosphate binding. Arginine 177 contributes to the D-glyceraldehyde 3-phosphate binding site. Residues glycine 226 and 247-248 (GS) contribute to the D-ribose 5-phosphate site.

Belongs to the PdxS/SNZ family. In the presence of PdxT, forms a dodecamer of heterodimers.

The enzyme catalyses aldehydo-D-ribose 5-phosphate + D-glyceraldehyde 3-phosphate + L-glutamine = pyridoxal 5'-phosphate + L-glutamate + phosphate + 3 H2O + H(+). It participates in cofactor biosynthesis; pyridoxal 5'-phosphate biosynthesis. Its function is as follows. Catalyzes the formation of pyridoxal 5'-phosphate from ribose 5-phosphate (RBP), glyceraldehyde 3-phosphate (G3P) and ammonia. The ammonia is provided by the PdxT subunit. Can also use ribulose 5-phosphate and dihydroxyacetone phosphate as substrates, resulting from enzyme-catalyzed isomerization of RBP and G3P, respectively. This chain is Pyridoxal 5'-phosphate synthase subunit PdxS, found in Salinispora tropica (strain ATCC BAA-916 / DSM 44818 / JCM 13857 / NBRC 105044 / CNB-440).